The chain runs to 451 residues: E3 ubiquitin-protein ligase trul-1 (451 aa).

The RING-type; atypical zinc finger occupies C13–R54. 2 coiled-coil regions span residues L96–K130 and N209–I243. Disordered stretches follow at residues R270 to P297 and K389 to S442. Residues S427–S442 show a composition bias toward low complexity.

It belongs to the TRAIP family.

The protein resides in the nucleus. Its subcellular location is the chromosome. The enzyme catalyses S-ubiquitinyl-[E2 ubiquitin-conjugating enzyme]-L-cysteine + [acceptor protein]-L-lysine = [E2 ubiquitin-conjugating enzyme]-L-cysteine + N(6)-ubiquitinyl-[acceptor protein]-L-lysine.. The protein operates within protein modification; protein ubiquitination. E3 ubiquitin ligase that acts as a key regulator of DNA repair in response to replication stress. Acts by mediating ubiquitination of the CMG helicase complex, promoting the unloading of the CMG helicase complex by the p97 ATPase (cdc-48.1 or cdc-48.2). The sequence is that of E3 ubiquitin-protein ligase trul-1 from Caenorhabditis elegans.